The following is a 746-amino-acid chain: Protein O-mannosyl-transferase 1 (746 aa).

7 consecutive transmembrane segments (helical) span residues 30 to 50 (PLVVTVDINLNLVALTGLGLL), 90 to 110 (FGHMLLALGGWLGGFDGNFLW), 121 to 141 (VPIWSLRLLPALAGALSVPMA), 144 to 164 (IVLELHFSHGAAIGAALLMLI), 176 to 196 (LLESILIFFNLLAVLSYLKFF), 228 to 248 (MGIFTYLLVLGIAAVHAWNLI), and 266 to 286 (IVALLVVPVFLYLLFFYVHLM). MIR domains follow at residues 318 to 381 (PLEV…VKDP), 392 to 449 (PRPV…LDIV), and 453 to 513 (SNRD…VEEH). N-linked (GlcNAc...) asparagine glycosylation is found at Asn435, Asn471, and Asn539. 3 helical membrane passes run 597–617 (IVIWTSASLATVVYTLLFFWY), 636–656 (WVLAGALCTGGWALNYLPFFL), and 660–680 (VLFLYHYLPALTFQILLLPIV).

It belongs to the glycosyltransferase 39 family.

It localises to the endoplasmic reticulum membrane. The enzyme catalyses a di-trans,poly-cis-dolichyl beta-D-mannosyl phosphate + L-seryl-[protein] = 3-O-(alpha-D-mannosyl)-L-seryl-[protein] + a di-trans,poly-cis-dolichyl phosphate + H(+). The catalysed reaction is a di-trans,poly-cis-dolichyl beta-D-mannosyl phosphate + L-threonyl-[protein] = 3-O-(alpha-D-mannosyl)-L-threonyl-[protein] + a di-trans,poly-cis-dolichyl phosphate + H(+). Its pathway is protein modification; protein glycosylation. Transfers mannosyl residues to the hydroxyl group of serine or threonine residues. Coexpression of both POMT1 and POMT2 is necessary for enzyme activity, expression of either POMT1 or POMT2 alone is insufficient. Essentially dedicated to O-mannosylation of alpha-DAG1 and few other proteins but not of cadherins and protocaherins. The chain is Protein O-mannosyl-transferase 1 (Pomt1) from Mus musculus (Mouse).